The chain runs to 172 residues: Translationally-controlled tumor protein (172 aa).

Positions 1–172 constitute a TCTP domain; sequence MIIYRDLISH…FKDGLEMEKC (172 aa). A phosphoserine mark is found at S46 and S53. S64 carries the phosphoserine; by PLK1 modification. The tract at residues 70–172 is required for reduction of TSC22D1 protein stability; the sequence is VDIVMNHHLQ…FKDGLEMEKC (103 aa).

Belongs to the TCTP family. Homodimer. Interacts with STEAP3. Interacts with TSC22D1; interaction results in the destabilization of TSC22D1 protein.

The protein resides in the cytoplasm. Functionally, involved in calcium binding and microtubule stabilization. Acts as a negative regulator of TSC22D1-mediated apoptosis, via interaction with and destabilization of TSC22D1 protein. This is Translationally-controlled tumor protein (Tpt1) from Mus musculus (Mouse).